A 442-amino-acid polypeptide reads, in one-letter code: Cytochrome c biogenesis CcmF C-terminal-like mitochondrial protein (442 aa).

The next 3 membrane-spanning stretches (helical) occupy residues 6 to 26 (NFFF…PVLL), 39 to 59 (PFFN…LVYL), and 122 to 142 (YLES…FFLA). The disordered stretch occupies residues 151-175 (RARRRKGQTLRPNGNEQRRNDKMRC). Over residues 166–175 (EQRRNDKMRC) the composition is skewed to basic and acidic residues. The chain crosses the membrane as a helical span at residues 411-431 (FIFFIWIGFMLASLGGLPSLL).

It belongs to the CcmF/CycK/Ccl1/NrfE/CcsA family. In terms of assembly, interacts with CCMFN2.

The protein localises to the mitochondrion inner membrane. Functionally, forms a complex with CCMFN1, CCMFN2 and CCMH that performs the assembly of heme with c-type apocytochromes in mitochondria. The sequence is that of Cytochrome c biogenesis CcmF C-terminal-like mitochondrial protein (CCMFC) from Arabidopsis thaliana (Mouse-ear cress).